Consider the following 360-residue polypeptide: Ferredoxin--NADP reductase, leaf isozyme 1, chloroplastic (360 aa).

A chloroplast-targeting transit peptide spans 1 to 49 (MAAAISAAVSLPSSKSSSLLTKISSVSPQRIFLKKSTVCYRRVVSVKAQ). In terms of domain architecture, FAD-binding FR-type spans 81 to 203 (KNPYTGRCLL…TGPVGKEMLM (123 aa)). FAD-binding positions include 139-142 (RLYS), 160-162 (CVK), tyrosine 166, and 177-179 (VCS). NADP(+) contacts are provided by serine 142 and lysine 162. The cysteines at positions 178 and 183 are disulfide-linked. Position 179 is a phosphoserine (serine 179). A Phosphothreonine modification is found at threonine 210. Residue threonine 218 coordinates FAD. Residues threonine 218, 250-251 (VP), 280-281 (SR), lysine 290, 319-320 (GL), and glutamate 358 contribute to the NADP(+) site.

This sequence belongs to the ferredoxin--NADP reductase type 1 family. As to quaternary structure, heterodimer with LFNR2. Interacts with PGRL1A and PGRL1B. Interacts with TIC62. Component of high molecular weight thylakoid LFNRs-containing protein complexes containing LIR1, LFNR1, LFNR2, TIC62 and TROL proteins. Interacts directly with LIR1 and TIC62; LIR1 increases the affinity of LFNR1 and LFNR2 for TIC62. Binds to YCF54 in chloroplasts. It depends on FAD as a cofactor. In terms of processing, may form interchain disulfide bonds with LIR1. Expressed in shoots. Restricted to green tissues, being more abundant in siliques.

The protein localises to the plastid. The protein resides in the chloroplast stroma. It is found in the chloroplast thylakoid membrane. The catalysed reaction is 2 reduced [2Fe-2S]-[ferredoxin] + NADP(+) + H(+) = 2 oxidized [2Fe-2S]-[ferredoxin] + NADPH. The protein operates within energy metabolism; photosynthesis. Its function is as follows. Plays a key role in regulating the relative amounts of cyclic and non-cyclic electron flow to meet the demands of the plant for ATP and reducing power. Probable electron donor required for the MgProto monomethylester (MgProtoME) cyclase complex reaction to form protochlorophyllide, thus connecting chlorophyll synthesis with photosynthetic activity. The chain is Ferredoxin--NADP reductase, leaf isozyme 1, chloroplastic from Arabidopsis thaliana (Mouse-ear cress).